We begin with the raw amino-acid sequence, 160 residues long: Large ribosomal subunit protein bL19 (160 aa).

Basic and acidic residues-rich tracts occupy residues 1 to 15 (MTED…KEES) and 28 to 39 (ATRETKPKDSPS). The segment at 1 to 44 (MTEDLKNTSPSKEESNEIEESSKATPKATRETKPKDSPSKTKLS) is disordered.

Belongs to the bacterial ribosomal protein bL19 family.

Functionally, this protein is located at the 30S-50S ribosomal subunit interface and may play a role in the structure and function of the aminoacyl-tRNA binding site. In Prochlorococcus marinus (strain SARG / CCMP1375 / SS120), this protein is Large ribosomal subunit protein bL19.